A 142-amino-acid polypeptide reads, in one-letter code: Augurin-A (142 aa).

The N-terminal stretch at 1 to 28 is a signal peptide; the sequence is MLSEKFHLRLLTLLTLLTALSLTDVASE. 2 consecutive propeptides follow at residues 29–66 and 127–142; these read SKLE…LKRP and GAAS…YDYY.

The protein belongs to the augurin family.

Its subcellular location is the secreted. The protein resides in the cytoplasm. It is found in the apical cell membrane. In terms of biological role, probable hormone. Required for the proper formation of the central nervous system by attenuating cell proliferation during development. This is Augurin-A from Danio rerio (Zebrafish).